The sequence spans 557 residues: Dihydroxy-acid dehydratase (557 aa).

A [2Fe-2S] cluster-binding site is contributed by cysteine 49. Aspartate 81 is a Mg(2+) binding site. Cysteine 122 lines the [2Fe-2S] cluster pocket. 2 residues coordinate Mg(2+): aspartate 123 and lysine 124. The residue at position 124 (lysine 124) is an N6-carboxylysine. Residue cysteine 194 participates in [2Fe-2S] cluster binding. Glutamate 446 contacts Mg(2+). The Proton acceptor role is filled by serine 472.

It belongs to the IlvD/Edd family. As to quaternary structure, homodimer. Requires [2Fe-2S] cluster as cofactor. It depends on Mg(2+) as a cofactor.

The catalysed reaction is (2R)-2,3-dihydroxy-3-methylbutanoate = 3-methyl-2-oxobutanoate + H2O. It catalyses the reaction (2R,3R)-2,3-dihydroxy-3-methylpentanoate = (S)-3-methyl-2-oxopentanoate + H2O. It participates in amino-acid biosynthesis; L-isoleucine biosynthesis; L-isoleucine from 2-oxobutanoate: step 3/4. The protein operates within amino-acid biosynthesis; L-valine biosynthesis; L-valine from pyruvate: step 3/4. Functionally, functions in the biosynthesis of branched-chain amino acids. Catalyzes the dehydration of (2R,3R)-2,3-dihydroxy-3-methylpentanoate (2,3-dihydroxy-3-methylvalerate) into 2-oxo-3-methylpentanoate (2-oxo-3-methylvalerate) and of (2R)-2,3-dihydroxy-3-methylbutanoate (2,3-dihydroxyisovalerate) into 2-oxo-3-methylbutanoate (2-oxoisovalerate), the penultimate precursor to L-isoleucine and L-valine, respectively. This chain is Dihydroxy-acid dehydratase, found in Prochlorococcus marinus (strain AS9601).